Here is a 132-residue protein sequence, read N- to C-terminus: Small ribosomal subunit protein uS8 (132 aa).

The protein belongs to the universal ribosomal protein uS8 family. As to quaternary structure, part of the 30S ribosomal subunit. Contacts proteins S5 and S12.

Its function is as follows. One of the primary rRNA binding proteins, it binds directly to 16S rRNA central domain where it helps coordinate assembly of the platform of the 30S subunit. This chain is Small ribosomal subunit protein uS8, found in Rickettsia conorii (strain ATCC VR-613 / Malish 7).